The primary structure comprises 410 residues: NADH-quinone oxidoreductase subunit H (410 aa).

9 consecutive transmembrane segments (helical) span residues 11–31 (LVAA…LVAI), 79–99 (FVYF…FAFI), 119–139 (LPVA…GIVL), 160–180 (VISY…MAGT), 192–212 (GVWY…SMVG), 257–277 (ALAA…NMWA), 283–303 (WWPL…YFWL), 317–337 (ALGW…AAII), and 347–367 (YWTP…VLLL). Positions 376–410 (ARASARQRGDEGTSPEPAFPTPPLLAGATKENAGG) are disordered.

It belongs to the complex I subunit 1 family. NDH-1 is composed of 14 different subunits. Subunits NuoA, H, J, K, L, M, N constitute the membrane sector of the complex.

Its subcellular location is the cell membrane. It carries out the reaction a quinone + NADH + 5 H(+)(in) = a quinol + NAD(+) + 4 H(+)(out). NDH-1 shuttles electrons from NADH, via FMN and iron-sulfur (Fe-S) centers, to quinones in the respiratory chain. The immediate electron acceptor for the enzyme in this species is believed to be menaquinone. Couples the redox reaction to proton translocation (for every two electrons transferred, four hydrogen ions are translocated across the cytoplasmic membrane), and thus conserves the redox energy in a proton gradient. This chain is NADH-quinone oxidoreductase subunit H, found in Mycobacterium bovis (strain ATCC BAA-935 / AF2122/97).